The following is a 165-amino-acid chain: Natriuretic peptide Na-NP (165 aa).

The N-terminal stretch at 1–25 (MVGLSRLAGGGLLLVLALLPLALDG) is a signal peptide. The propeptide occupies 26 to 83 (KPAPEALHKPPTGLRTSLAALRILGYLRPDSKQSRAARDRMLHPEQQVGGGGDSRPLQ). Basic and acidic residues predominate over residues 56–68 (SKQSRAARDRMLH). Disordered regions lie at residues 56–100 (SKQS…QKID) and 135–165 (PDSK…SRVI). An intrachain disulfide couples C94 to C110. Residues 129–165 (ILEYLRPDSKRSRATRDRMLHPEQQVGGGGGGGSRVI) constitute a propeptide that is removed on maturation. The span at 135–149 (PDSKRSRATRDRMLH) shows a compositional bias: basic and acidic residues. Residues 154–165 (VGGGGGGGSRVI) are compositionally biased toward gly residues.

The protein belongs to the natriuretic peptide family. In terms of tissue distribution, expressed by the venom gland.

Its subcellular location is the secreted. Natriuretic peptide that dose-dependently induces the rapid relaxation of rat aortic strips phenylephrine-precontracted. Acts by stimulating cGMP production in a dose-dependent manner (by probably activating NPR1 and/or NPR2). May also show potent hypotensive effects. The polypeptide is Natriuretic peptide Na-NP (Naja atra (Chinese cobra)).